The primary structure comprises 330 residues: Aspartate--ammonia ligase (330 aa).

The protein belongs to the class-II aminoacyl-tRNA synthetase family. AsnA subfamily.

The protein resides in the cytoplasm. The catalysed reaction is L-aspartate + NH4(+) + ATP = L-asparagine + AMP + diphosphate + H(+). It functions in the pathway amino-acid biosynthesis; L-asparagine biosynthesis; L-asparagine from L-aspartate (ammonia route): step 1/1. This is Aspartate--ammonia ligase from Streptococcus thermophilus (strain CNRZ 1066).